The following is a 128-amino-acid chain: Sm-like protein LSM1A (128 aa).

In terms of domain architecture, Sm spans 10-85 (FFSTSLAAYL…VVLIGELDVE (76 aa)).

It belongs to the snRNP Sm proteins family. As to quaternary structure, component of the heptameric LSM1-LSM7 complex that forms a seven-membered ring structure with a donut shape. The LSM subunits are arranged in the order LSM1, LSM2, LSM3, LSM6, LSM5, LSM7 and LSM4. LSM1A subunit interacts only with its two neighboring subunits, LSM2 and LSM4. As to expression, expressed in roots, leaves, stems, flowers and siliques.

It localises to the cytoplasm. The protein localises to the P-body. Component of the cytoplasmic LSM1-LSM7 complex which is involved in mRNA degradation by promoting decapping and leading to accurate 5'-3' mRNA decay. LSM1A and LSM1B are essential for the formation of the cytoplasmic LSM1-LSM7 complex which regulates developmental gene expression by the decapping of specific development-related transcripts. Required for P-body formation during heat stress. The protein is Sm-like protein LSM1A of Arabidopsis thaliana (Mouse-ear cress).